A 611-amino-acid chain; its full sequence is DNA mismatch repair protein MutL (611 aa).

The segment at 364 to 384 is disordered; the sequence is NVNSKPSKYRPATSPTVPKYT.

This sequence belongs to the DNA mismatch repair MutL/HexB family.

Functionally, this protein is involved in the repair of mismatches in DNA. It is required for dam-dependent methyl-directed DNA mismatch repair. May act as a 'molecular matchmaker', a protein that promotes the formation of a stable complex between two or more DNA-binding proteins in an ATP-dependent manner without itself being part of a final effector complex. The protein is DNA mismatch repair protein MutL of Rickettsia bellii (strain OSU 85-389).